The chain runs to 150 residues: Protein SprT-like (150 aa).

Positions L6–R147 constitute a SprT-like domain. Position 67 (H67) interacts with Zn(2+). Residue E68 is part of the active site. Residue H71 participates in Zn(2+) binding.

Belongs to the SprT family. Requires Zn(2+) as cofactor.

Its subcellular location is the cytoplasm. The protein is Protein SprT-like (ydcK) of Bacillus subtilis (strain 168).